A 152-amino-acid polypeptide reads, in one-letter code: MHCPFCSTEETKVIDSRLVSEGYQVRRRRECTNCHERFTTFETAELVIPKIVKTDGYREPFNEDKLRRSIQQAVGKRPVSEDDVEKSISCIIHKLQTTGEREVPSKLVGDLVMDELKKLDKVAYIRFASVYLSFENINEFTKEIEKLKKSQK.

A zinc finger lies at 3 to 34; it reads CPFCSTEETKVIDSRLVSEGYQVRRRRECTNC. The 91-residue stretch at 49–139 folds into the ATP-cone domain; that stretch reads PKIVKTDGYR…VYLSFENINE (91 aa).

The protein belongs to the NrdR family. Requires Zn(2+) as cofactor.

Its function is as follows. Negatively regulates transcription of bacterial ribonucleotide reductase nrd genes and operons by binding to NrdR-boxes. This is Transcriptional repressor NrdR from Actinobacillus succinogenes (strain ATCC 55618 / DSM 22257 / CCUG 43843 / 130Z).